The primary structure comprises 181 residues: Small ribosomal subunit protein uS4 (181 aa).

In terms of domain architecture, S4 RNA-binding spans 108–177 (RRLQTMVYRQ…EGHPEIERIN (70 aa)). The tract at residues 161–181 (GTSPLTSEGHPEIERINKKRR) is disordered. The segment covering 169-181 (GHPEIERINKKRR) has biased composition (basic and acidic residues).

It belongs to the universal ribosomal protein uS4 family. As to quaternary structure, part of the 30S ribosomal subunit. Contacts protein S5. The interaction surface between S4 and S5 is involved in control of translational fidelity.

In terms of biological role, one of the primary rRNA binding proteins, it binds directly to 16S rRNA where it nucleates assembly of the body of the 30S subunit. With S5 and S12 plays an important role in translational accuracy. The protein is Small ribosomal subunit protein uS4 of Methanosphaerula palustris (strain ATCC BAA-1556 / DSM 19958 / E1-9c).